Consider the following 129-residue polypeptide: Ribosome-binding factor A (129 aa).

Belongs to the RbfA family. Monomer. Binds 30S ribosomal subunits, but not 50S ribosomal subunits or 70S ribosomes.

It is found in the cytoplasm. Its function is as follows. One of several proteins that assist in the late maturation steps of the functional core of the 30S ribosomal subunit. Associates with free 30S ribosomal subunits (but not with 30S subunits that are part of 70S ribosomes or polysomes). Required for efficient processing of 16S rRNA. May interact with the 5'-terminal helix region of 16S rRNA. The protein is Ribosome-binding factor A of Gloeobacter violaceus (strain ATCC 29082 / PCC 7421).